A 25-amino-acid polypeptide reads, in one-letter code: NPVDDIXIAKPRDIPMNPMXIYRSP.

It belongs to the serpin family. In terms of assembly, forms protease inhibiting heterodimer with TMPRSS7. Post-translationally, phosphorylated by FAM20C in the extracellular medium. As to expression, plasma.

It localises to the secreted. Its subcellular location is the extracellular space. Functionally, most important serine protease inhibitor in plasma that regulates the blood coagulation cascade. AT-III inhibits thrombin, matriptase-3/TMPRSS7, as well as factors IXa, Xa and XIa. Its inhibitory activity is greatly enhanced in the presence of heparin. The sequence is that of Antithrombin-III (SERPINC1) from Mesocricetus auratus (Golden hamster).